We begin with the raw amino-acid sequence, 173 residues long: Large ribosomal subunit protein uL10 (173 aa).

It belongs to the universal ribosomal protein uL10 family. In terms of assembly, part of the ribosomal stalk of the 50S ribosomal subunit. The N-terminus interacts with L11 and the large rRNA to form the base of the stalk. The C-terminus forms an elongated spine to which L12 dimers bind in a sequential fashion forming a multimeric L10(L12)X complex.

Functionally, forms part of the ribosomal stalk, playing a central role in the interaction of the ribosome with GTP-bound translation factors. This chain is Large ribosomal subunit protein uL10, found in Cupriavidus pinatubonensis (strain JMP 134 / LMG 1197) (Cupriavidus necator (strain JMP 134)).